A 281-amino-acid chain; its full sequence is 2-dehydro-3-deoxyphosphooctonate aldolase (281 aa).

The protein belongs to the KdsA family.

It is found in the cytoplasm. The catalysed reaction is D-arabinose 5-phosphate + phosphoenolpyruvate + H2O = 3-deoxy-alpha-D-manno-2-octulosonate-8-phosphate + phosphate. The protein operates within carbohydrate biosynthesis; 3-deoxy-D-manno-octulosonate biosynthesis; 3-deoxy-D-manno-octulosonate from D-ribulose 5-phosphate: step 2/3. Its pathway is bacterial outer membrane biogenesis; lipopolysaccharide biosynthesis. The protein is 2-dehydro-3-deoxyphosphooctonate aldolase of Psychromonas ingrahamii (strain DSM 17664 / CCUG 51855 / 37).